The sequence spans 678 residues: Zinc finger protein 334 (678 aa).

Residues 8-79 (VSFQDLTVNF…EEFSNQNYPE (72 aa)) form the KRAB domain. C2H2-type zinc fingers lie at residues 235–257 (NEPC…QRIH), 263–285 (YVCN…QRIH), 291–313 (YECS…QKIH), 319–341 (YECN…FRSH), 347–369 (YECK…QRTH), 375–397 (NECK…QRIH), 403–425 (YECS…RRSH), 431–453 (YECS…QITH), 459–481 (YECN…QRTH), 542–564 (YECN…QRTH), 570–592 (YECN…QRTH), 598–620 (YERN…RRIH), 626–648 (YECN…QKIH), and 654–676 (YECN…QKSH).

Belongs to the krueppel C2H2-type zinc-finger protein family.

The protein localises to the nucleus. In terms of biological role, may be involved in transcriptional regulation. This Pongo abelii (Sumatran orangutan) protein is Zinc finger protein 334 (ZNF334).